The primary structure comprises 164 residues: 2-C-methyl-D-erythritol 2,4-cyclodiphosphate synthase (164 aa).

D9 and H11 together coordinate a divalent metal cation. 4-CDP-2-C-methyl-D-erythritol 2-phosphate contacts are provided by residues D9–H11 and H36–S37. An a divalent metal cation-binding site is contributed by H44. Residues D58–G60, F63–D67, T134–E137, F141, and R144 each bind 4-CDP-2-C-methyl-D-erythritol 2-phosphate.

The protein belongs to the IspF family. As to quaternary structure, homotrimer. Requires a divalent metal cation as cofactor.

The enzyme catalyses 4-CDP-2-C-methyl-D-erythritol 2-phosphate = 2-C-methyl-D-erythritol 2,4-cyclic diphosphate + CMP. The protein operates within isoprenoid biosynthesis; isopentenyl diphosphate biosynthesis via DXP pathway; isopentenyl diphosphate from 1-deoxy-D-xylulose 5-phosphate: step 4/6. Functionally, involved in the biosynthesis of isopentenyl diphosphate (IPP) and dimethylallyl diphosphate (DMAPP), two major building blocks of isoprenoid compounds. Catalyzes the conversion of 4-diphosphocytidyl-2-C-methyl-D-erythritol 2-phosphate (CDP-ME2P) to 2-C-methyl-D-erythritol 2,4-cyclodiphosphate (ME-CPP) with a corresponding release of cytidine 5-monophosphate (CMP). The protein is 2-C-methyl-D-erythritol 2,4-cyclodiphosphate synthase of Alkalilimnicola ehrlichii (strain ATCC BAA-1101 / DSM 17681 / MLHE-1).